A 1027-amino-acid polypeptide reads, in one-letter code: MKTFLGKKLWMASLAVALAAGSFAALPEMTSAAPSEPYTWKNVVTGAGGGFVPGIIFNESEKDLIYARTDIGGAYRWNPANESWIPLTDFVGWDDWNKNGVDALATDPVDPDRVYLAVGTYTNSWDKNNGAILRSTDRGDTWQTTTLPFKVGGNMPGRSMGERLVVDPNDNRILYFGARSGNGLWRSSDYGATWSKVTSFPNPGTYVQDPANEYGSDIVGLAWITFDKSSGQVGQATQTIYVGVADTAQSIYRSTDGGATWTAVPGQPTGYLPHHGVLDADGSLYITYSNGVGPYDGTKGDVWKLNTSTGAWTNISPIPSSSADNYFGYGGLAVDAQEPGTLMVATLNSWWPDAILFRSKDGGTTWTRIWEFDGYPNRKFRYTQNISAAPWLTFGTTPAPPEVSPKLGWMIGDLEIDPFDSDRMMYGTGATIYGTNNLTNWDNNEKIDISVMAKGVEEMAVLDLVSPPSGAHLVSGLGDVNGFRHDDLDQPPAKMFSSPNYASTESLDFAELNPSTMVRVGKADYAADPNAKSIGLSSDGGTNWYKANAEPAGTAGGGTVAISSDGSKLVWSTSDKGVHYSSTGGNSWTASTGIPAQAKVISDRVNPNKFYGFAAGKIYVSVNGGVSFSQTAAAGLPVDGNADLDAVPGVEGELWFAGGNEDGGPYGLWHSTDSGASFAKLSNVEEADSIGFGKAAPGRNSAALYAVAQIDGTRGFFRSDDGGASWVRINDDAHQYARVTTITGDPRIYGRVYLGTNGRGILYADPVGGNNGGETPPVSHSGISPQSTEFDLNADRQADIPVALTLNGNTLASIRNGNHVLVQGSDYTMSGSQVFLSKTYLATLSKGVQSLVFRFSAGNDATLSITVKDTTQVPLPEGSIRIEMYNGTTSATANSINPKFKLTNTGTAPLQLADVNIRYYYTIDGEKPLNFFCDWATAGSANVTGTFSALPAAVNGADHVLEIGFTASAGTLAAGQSTEVQVRFSKTDWTNFTQTDDYSFAASSTAYENWSKVTGYVSGTLQWGIEP.

The signal sequence occupies residues 1 to 32; it reads MKTFLGKKLWMASLAVALAAGSFAALPEMTSA. D70 acts as the Nucleophile in catalysis. BNR repeat units lie at residues 134 to 143, 185 to 196, 252 to 262, and 357 to 367; these read RSTDRGDTWQ, WRSSDYGATWSK, YRSTDGGATWT, and FRSKDGGTTWT. D479 (proton donor) is an active-site residue. 2 BNR repeats span residues 537–545 and 717–727; these read SSDGGTNWY and FRSDDGGASWV. Residues 876-1027 enclose the CBM3 domain; that stretch reads PEGSIRIEMY…SGTLQWGIEP (152 aa).

The protein belongs to the glycosyl hydrolase 74 family.

Functionally, hydrolyzes the glucosidic bonds of unbranched Glc residues in tamarind seed xyloglucan, producing XXXG, XLXG, XXLG and XLLG. May have a dual endo- and exo- mode of action towards xyloglucan, or may have an endo-processive mode of action. In Paenibacillus sp, this protein is Xyloglucanase.